Here is a 338-residue protein sequence, read N- to C-terminus: Glycerol-3-phosphate dehydrogenase [NAD(P)+] (338 aa).

S13, W14, and K108 together coordinate NADPH. 3 residues coordinate sn-glycerol 3-phosphate: K108, G139, and S141. Position 143 (A143) interacts with NADPH. Sn-glycerol 3-phosphate contacts are provided by K194, D247, S257, R258, and N259. The active-site Proton acceptor is K194. Position 258 (R258) interacts with NADPH. 2 residues coordinate NADPH: V282 and E284.

Belongs to the NAD-dependent glycerol-3-phosphate dehydrogenase family.

Its subcellular location is the cytoplasm. The enzyme catalyses sn-glycerol 3-phosphate + NAD(+) = dihydroxyacetone phosphate + NADH + H(+). It catalyses the reaction sn-glycerol 3-phosphate + NADP(+) = dihydroxyacetone phosphate + NADPH + H(+). Its pathway is membrane lipid metabolism; glycerophospholipid metabolism. Its function is as follows. Catalyzes the reduction of the glycolytic intermediate dihydroxyacetone phosphate (DHAP) to sn-glycerol 3-phosphate (G3P), the key precursor for phospholipid synthesis. In Listeria monocytogenes serotype 4a (strain HCC23), this protein is Glycerol-3-phosphate dehydrogenase [NAD(P)+].